We begin with the raw amino-acid sequence, 501 residues long: Aldehyde dehydrogenase 1A1 (501 aa).

S2 bears the N-acetylserine mark. 2 positions are modified to N6-acetyllysine: K91 and K128. NAD(+)-binding positions include 167 to 170 (IPWN), 193 to 196 (KPAE), 226 to 227 (GP), and 246 to 247 (GS). K252 is modified (N6-acetyllysine). The active-site Proton acceptor is E269. 269–271 (ELG) provides a ligand contact to NAD(+). C303 serves as the catalytic Nucleophile. Residues 336–501 (LTPGINQGPQ…VAMKISQKNS (166 aa)) are mediates interaction with PRMT3. T337 carries the phosphothreonine modification. 349–353 (EQHDK) provides a ligand contact to NAD(+). N6-acetyllysine is present on residues K353 and K367. Residue 400–402 (EIF) participates in NAD(+) binding. Residue K410 is modified to N6-acetyllysine. S413 bears the Phosphoserine mark. N6-acetyllysine occurs at positions 419, 435, and 495.

This sequence belongs to the aldehyde dehydrogenase family. Homotetramer. Interacts with PRMT3; the interaction is direct, inhibits ALDH1A1 aldehyde dehydrogenase activity and is independent of the methyltransferase activity of PRMT3. The N-terminus is blocked most probably by acetylation. As to expression, expressed in retina. Expressed in lens and cornea (at protein level). Expressed by midbrain dopamine neurons.

The protein localises to the cytoplasm. It is found in the cytosol. It localises to the cell projection. The protein resides in the axon. It carries out the reaction an aldehyde + NAD(+) + H2O = a carboxylate + NADH + 2 H(+). The enzyme catalyses all-trans-retinal + NAD(+) + H2O = all-trans-retinoate + NADH + 2 H(+). It catalyses the reaction 9-cis-retinal + NAD(+) + H2O = 9-cis-retinoate + NADH + 2 H(+). The catalysed reaction is 11-cis-retinal + NAD(+) + H2O = 11-cis-retinoate + NADH + 2 H(+). It carries out the reaction 13-cis-retinal + NAD(+) + H2O = 13-cis-retinoate + NADH + 2 H(+). The enzyme catalyses 4-aminobutanal + NAD(+) + H2O = 4-aminobutanoate + NADH + 2 H(+). It catalyses the reaction 3-deoxyglucosone + NAD(+) + H2O = 2-dehydro-3-deoxy-D-gluconate + NADH + 2 H(+). The catalysed reaction is (E)-4-hydroxynon-2-enal + NAD(+) + H2O = (E)-4-hydroxynon-2-enoate + NADH + 2 H(+). It carries out the reaction malonaldehyde + NAD(+) + H2O = 3-oxopropanoate + NADH + 2 H(+). The enzyme catalyses hexanal + NAD(+) + H2O = hexanoate + NADH + 2 H(+). It catalyses the reaction propanal + NAD(+) + H2O = propanoate + NADH + 2 H(+). The catalysed reaction is acetaldehyde + NAD(+) + H2O = acetate + NADH + 2 H(+). It carries out the reaction benzaldehyde + NAD(+) + H2O = benzoate + NADH + 2 H(+). It participates in cofactor metabolism; retinol metabolism. The aminobutyraldehyde dehydrogenase activity is negatively regulated by ethanol in vivo. Its function is as follows. Cytosolic dehydrogenase that catalyzes the irreversible oxidation of a wide range of aldehydes to their corresponding carboxylic acid. Functions downstream of retinol dehydrogenases and catalyzes the oxidation of retinaldehyde into retinoic acid, the second step in the oxidation of retinol/vitamin A into retinoic acid. This pathway is crucial to control the levels of retinol and retinoic acid, two important molecules which excess can be teratogenic and cytotoxic. Also oxidizes aldehydes resulting from lipid peroxidation like (E)-4-hydroxynon-2-enal/HNE, malonaldehyde and hexanal that form protein adducts and are highly cytotoxic. By participating for instance to the clearance of (E)-4-hydroxynon-2-enal/HNE in the lens epithelium prevents the formation of HNE-protein adducts and lens opacification. Also functions downstream of fructosamine-3-kinase in the fructosamine degradation pathway by catalyzing the oxidation of 3-deoxyglucosone, the carbohydrate product of fructosamine 3-phosphate decomposition, which is itself a potent glycating agent that may react with lysine and arginine side-chains of proteins. Also has an aminobutyraldehyde dehydrogenase activity and is probably part of an alternative pathway for the biosynthesis of GABA/4-aminobutanoate in midbrain, thereby playing a role in GABAergic synaptic transmission. The chain is Aldehyde dehydrogenase 1A1 from Mus musculus (Mouse).